The following is a 274-amino-acid chain: tRNA-cytidine(32) 2-sulfurtransferase (274 aa).

A PP-loop motif motif is present at residues 40-45; it reads SGGKDS. The [4Fe-4S] cluster site is built by Cys115, Cys118, and Cys206.

It belongs to the TtcA family. Homodimer. Mg(2+) serves as cofactor. The cofactor is [4Fe-4S] cluster.

It is found in the cytoplasm. It catalyses the reaction cytidine(32) in tRNA + S-sulfanyl-L-cysteinyl-[cysteine desulfurase] + AH2 + ATP = 2-thiocytidine(32) in tRNA + L-cysteinyl-[cysteine desulfurase] + A + AMP + diphosphate + H(+). Its pathway is tRNA modification. In terms of biological role, catalyzes the ATP-dependent 2-thiolation of cytidine in position 32 of tRNA, to form 2-thiocytidine (s(2)C32). The sulfur atoms are provided by the cysteine/cysteine desulfurase (IscS) system. The polypeptide is tRNA-cytidine(32) 2-sulfurtransferase (Pseudomonas putida (strain W619)).